The primary structure comprises 418 residues: MNIFEELKARGLVFQTTDEQALVKALTEGQVSYYTGYDPTADSLHLGHLVAILTSRRLQLAGHKPYALVGGATGLIGDPSFKDAERSLQTKETVLEWSDKIKGQLSTFLDFENGDNKAELVNNYDWFSQISFIDFLRDVGKYFTVNYMMSKDSVKKRIETGISYTEFAYQIMQGYDFYELNDKHNVTLQIGGSDQWGNMTAGTELLRKKADKTGHVMTVPLITDSTGKKFGKSEGNAVWLDADKTSPYEMYQFWLNVMDDDAVRFLKIFTFLSLDEIAEIESEFNAARHERLAQKTLAREVVTLVHGEEAYKQALNITEQLFAGNIKNLSANELKQGLSNVPNYHVQSEDSLNLVDMLVTAGISPSKRQAREDVQNGAIYINGDRIQDLDYQLSNDDKIDDQLTVIRRGKKKYAVLTY.

Tyr-34 is a binding site for L-tyrosine. The 'HIGH' region signature appears at 39-48 (PTADSLHLGH). The L-tyrosine site is built by Tyr-169 and Gln-173. Positions 229-233 (KFGKS) match the 'KMSKS' region motif. Lys-232 contributes to the ATP binding site. An S4 RNA-binding domain is found at 352-418 (LNLVDMLVTA…GKKKYAVLTY (67 aa)).

The protein belongs to the class-I aminoacyl-tRNA synthetase family. TyrS type 1 subfamily. As to quaternary structure, homodimer.

The protein localises to the cytoplasm. The catalysed reaction is tRNA(Tyr) + L-tyrosine + ATP = L-tyrosyl-tRNA(Tyr) + AMP + diphosphate + H(+). Its function is as follows. Catalyzes the attachment of tyrosine to tRNA(Tyr) in a two-step reaction: tyrosine is first activated by ATP to form Tyr-AMP and then transferred to the acceptor end of tRNA(Tyr). This is Tyrosine--tRNA ligase from Streptococcus pyogenes serotype M18 (strain MGAS8232).